The sequence spans 501 residues: Phenylalanine--tRNA ligase alpha subunit (501 aa).

L-phenylalanine contacts are provided by Thr340 and Phe423. Position 425 (Glu425) interacts with Mg(2+). Position 448 (Phe448) interacts with L-phenylalanine.

It belongs to the class-II aminoacyl-tRNA synthetase family. Phe-tRNA synthetase alpha subunit type 2 subfamily. In terms of assembly, tetramer of two alpha and two beta subunits. Mg(2+) serves as cofactor.

The protein resides in the cytoplasm. It carries out the reaction tRNA(Phe) + L-phenylalanine + ATP = L-phenylalanyl-tRNA(Phe) + AMP + diphosphate + H(+). This Methanococcus maripaludis (strain C7 / ATCC BAA-1331) protein is Phenylalanine--tRNA ligase alpha subunit.